A 208-amino-acid chain; its full sequence is Putative ribosomal protein uS2-like (208 aa).

This sequence belongs to the universal ribosomal protein uS2 family.

It is found in the plastid. The protein resides in the chloroplast. This Chlamydomonas reinhardtii (Chlamydomonas smithii) protein is Putative ribosomal protein uS2-like (rps2-2).